A 294-amino-acid polypeptide reads, in one-letter code: UPF0718 protein YcgR (294 aa).

The next 8 membrane-spanning stretches (helical) occupy residues I15 to I35, L54 to I74, A92 to F112, S117 to L137, I174 to M194, L215 to A235, L247 to A267, and F273 to K293.

The protein belongs to the UPF0718 family.

The protein localises to the cell membrane. This Bacillus subtilis (strain 168) protein is UPF0718 protein YcgR (ycgR).